The primary structure comprises 397 residues: Protein-glutamate methylesterase/protein-glutamine glutaminase of group 2 operon (397 aa).

One can recognise a Response regulatory domain in the interval arginine 21–histidine 139. Aspartate 72 is modified (4-aspartylphosphate). Residues proline 199–valine 388 enclose the CheB-type methylesterase domain. Catalysis depends on residues serine 213, histidine 241, and aspartate 337.

It belongs to the CheB family. In terms of processing, phosphorylated by CheA. Phosphorylation of the N-terminal regulatory domain activates the methylesterase activity.

The protein localises to the cytoplasm. It catalyses the reaction [protein]-L-glutamate 5-O-methyl ester + H2O = L-glutamyl-[protein] + methanol + H(+). It carries out the reaction L-glutaminyl-[protein] + H2O = L-glutamyl-[protein] + NH4(+). In terms of biological role, involved in chemotaxis. Part of a chemotaxis signal transduction system that modulates chemotaxis in response to various stimuli. Catalyzes the demethylation of specific methylglutamate residues introduced into the chemoreceptors (methyl-accepting chemotaxis proteins or MCP) by CheR. Also mediates the irreversible deamidation of specific glutamine residues to glutamic acid. In Bradyrhizobium diazoefficiens (strain JCM 10833 / BCRC 13528 / IAM 13628 / NBRC 14792 / USDA 110), this protein is Protein-glutamate methylesterase/protein-glutamine glutaminase of group 2 operon.